A 308-amino-acid chain; its full sequence is Glycine--tRNA ligase alpha subunit (308 aa).

Belongs to the class-II aminoacyl-tRNA synthetase family. In terms of assembly, tetramer of two alpha and two beta subunits.

It localises to the cytoplasm. The enzyme catalyses tRNA(Gly) + glycine + ATP = glycyl-tRNA(Gly) + AMP + diphosphate. The protein is Glycine--tRNA ligase alpha subunit of Streptococcus pyogenes serotype M3 (strain SSI-1).